Consider the following 179-residue polypeptide: Segregation and condensation protein B (179 aa).

The protein belongs to the ScpB family. As to quaternary structure, homodimer. Homodimerization may be required to stabilize the binding of ScpA to the Smc head domains. Component of a cohesin-like complex composed of ScpA, ScpB and the Smc homodimer, in which ScpA and ScpB bind to the head domain of Smc. The presence of the three proteins is required for the association of the complex with DNA.

Its subcellular location is the cytoplasm. Functionally, participates in chromosomal partition during cell division. May act via the formation of a condensin-like complex containing Smc and ScpA that pull DNA away from mid-cell into both cell halves. In Streptococcus equi subsp. zooepidemicus (strain H70), this protein is Segregation and condensation protein B.